Consider the following 233-residue polypeptide: Endo-1,4-beta-xylanase 1 (233 aa).

An N-terminal signal peptide occupies residues 1-20 (MVSFTSIVTAVVALAGSALA). An N-linked (GlcNAc...) asparagine glycan is attached at Asn27. Positions 40–230 (QSTPSSTGRH…SAGNSNINVQ (191 aa)) constitute a GH11 domain. The active-site Nucleophile is Glu126. Residue Glu217 is the Proton donor of the active site.

The protein belongs to the glycosyl hydrolase 11 (cellulase G) family.

It localises to the secreted. It catalyses the reaction Endohydrolysis of (1-&gt;4)-beta-D-xylosidic linkages in xylans.. Its pathway is glycan degradation; xylan degradation. Its function is as follows. Endo-1,4-beta-xylanase involved in the hydrolysis of xylan, a major structural heterogeneous polysaccharide found in plant biomass representing the second most abundant polysaccharide in the biosphere, after cellulose. Accounts for approximately 70 percent of the endoxylanase activity in the culture filtrate. The polypeptide is Endo-1,4-beta-xylanase 1 (XYL1) (Pyricularia grisea (Crabgrass-specific blast fungus)).